The sequence spans 98 residues: NADH-ubiquinone oxidoreductase chain 4L (98 aa).

The next 3 membrane-spanning stretches (helical) occupy residues 1 to 21 (MTTIYLNLILAFTLALSGVLI), 26 to 46 (LLSTLLCLEGMMLSLFILMAL), and 59 to 79 (APLILLVFSACEAGVGLALLV).

This sequence belongs to the complex I subunit 4L family. In terms of assembly, core subunit of respiratory chain NADH dehydrogenase (Complex I) which is composed of 45 different subunits.

Its subcellular location is the mitochondrion inner membrane. The enzyme catalyses a ubiquinone + NADH + 5 H(+)(in) = a ubiquinol + NAD(+) + 4 H(+)(out). Its function is as follows. Core subunit of the mitochondrial membrane respiratory chain NADH dehydrogenase (Complex I) which catalyzes electron transfer from NADH through the respiratory chain, using ubiquinone as an electron acceptor. Part of the enzyme membrane arm which is embedded in the lipid bilayer and involved in proton translocation. This is NADH-ubiquinone oxidoreductase chain 4L (MT-ND4L) from Rhyncholestes raphanurus (Chilean shrew opossum).